The sequence spans 365 residues: uncharacterized protein (365 aa).

2 stretches are compositionally biased toward basic and acidic residues: residues 1–27 (MDNV…EDHS) and 315–339 (AKDD…ETPK). Disordered regions lie at residues 1–31 (MDNV…NSYQ) and 308–365 (KEEK…CLIS). Polar residues predominate over residues 340-353 (KASNTPRRNKSNTQ).

To yeast YGL082w. Interacts with sad1.

The protein localises to the cytoplasm. This is an uncharacterized protein from Schizosaccharomyces pombe (strain 972 / ATCC 24843) (Fission yeast).